A 168-amino-acid polypeptide reads, in one-letter code: Photosystem I assembly protein Ycf3 (168 aa).

3 TPR repeats span residues Ala35 to Pro68, Ser72 to Leu105, and Gly120 to Asn153.

This sequence belongs to the Ycf3 family.

The protein resides in the plastid. It is found in the chloroplast thylakoid membrane. Functionally, essential for the assembly of the photosystem I (PSI) complex. May act as a chaperone-like factor to guide the assembly of the PSI subunits. In Daucus carota (Wild carrot), this protein is Photosystem I assembly protein Ycf3.